A 275-amino-acid polypeptide reads, in one-letter code: Elongation factor Ts (275 aa).

Residue lysine 36 forms an Isoglutamyl lysine isopeptide (Lys-Gln) (interchain with Q-Cter in protein Pup) linkage. The involved in Mg(2+) ion dislocation from EF-Tu stretch occupies residues 76–79 (TDFV).

Belongs to the EF-Ts family.

It localises to the cytoplasm. Associates with the EF-Tu.GDP complex and induces the exchange of GDP to GTP. It remains bound to the aminoacyl-tRNA.EF-Tu.GTP complex up to the GTP hydrolysis stage on the ribosome. The polypeptide is Elongation factor Ts (Mycolicibacterium smegmatis (strain ATCC 700084 / mc(2)155) (Mycobacterium smegmatis)).